We begin with the raw amino-acid sequence, 446 residues long: Packaging protein 1 (446 aa).

Over residues 1–10 the composition is skewed to basic residues; it reads METRGRRRAF. A disordered region spans residues 1–74; it reads METRGRRRAF…PSQPPQPRSL (74 aa). 170 to 177 is a binding site for ATP; sequence GPTGCGKS. Residues 439–446 are DNA-binding; sequence RAYRKRNK.

The protein belongs to the adenoviridae packaging protein 1 family. As to quaternary structure, homodimer. Part of a genome packaging complex composed of packaging proteins 1, 2 and 3; this complex specifically binds to the packaging sequence on the left end of viral genomic DNA and performs packaging of the viral genome. Interacts with protein 33K.

The protein resides in the virion. Its subcellular location is the host nucleus. The protein localises to the host nucleoplasm. It is found in the host nucleolus. Its function is as follows. Component of the packaging machinery which encapsidates the viral DNA into preformed capsids and transcriptional activator of the viral major late promoter (MLP). Binds, along with packaging proteins 2 and 3, to the specific packaging sequence on the left end of viral genomic DNA and displays ATPase activity thereby providing the power stroke of the packaging machinery. The activity of packaging protein IVa2 is stimulated by protein 33K which acts as a terminase. May be the protein that pumps DNA into the capsid powered by ATP hydrolysis. Specifically binds to the 5'-CG-3' nucleotides of the repeats making up the packaging sequence. Component of the DEF-A and DEF-B transcription factors that bind downstream elements of the major late promoter (MLP), and stimulate transcription from the MLP after initiation of viral DNA replication. DEF-A is a heterodimer packaging proteins 1 and 2 and DEF-B is a homodimer of packaging protein 1. The sequence is that of Packaging protein 1 from Human adenovirus F serotype 40 (HAdV-40).